The primary structure comprises 92 residues: uncharacterized protein (92 aa).

This is an uncharacterized protein from Methanocaldococcus jannaschii (strain ATCC 43067 / DSM 2661 / JAL-1 / JCM 10045 / NBRC 100440) (Methanococcus jannaschii).